The primary structure comprises 161 residues: MSTLGSTCFTEEQEALVVKSWSVMKKNSAELGLKLFLKIFEIAPSAQKLFSFLRDSKVPLEENPKLKPHAMSVFVMTCESAAQLRKAGKVTVRESTLKKLGATHYKYGVVNEHFEVTKFALLDTIKEAVPEMWSPEMKNAWTQAYDQLVGAIKSEMKPSSS.

Positions 8-157 (CFTEEQEALV…LVGAIKSEMK (150 aa)) constitute a Globin domain. A Homodimerization motif is present at residues 41-45 (EIAPS). Residues Ser51, Lys65, His69, Lys99, Thr103, and His104 each coordinate heme b. Residues 111 to 123 (NEHFEVTKFALLD) carry the Homodimerization motif.

Belongs to the plant globin family. In terms of assembly, homodimer. The cofactor is heme b. Mainly expressed in root nodules, and, to a lower extent, in leaves, roots, stems, flowers and fruits. Accumulates in mature root nodules.

The enzyme catalyses Fe(III)-heme b-[protein] + nitric oxide + H2O = Fe(II)-heme b-[protein] + nitrite + 2 H(+). In terms of biological role, phytoglobin that reduces nitrite to nitric oxide (NO) under anoxic conditions (e.g. during flooding or in waterlogged soil) and upon root nodulation. Required for general plant development and during nodulation, especially for the onset of symbiosis. Monitors nitric oxide (NO) levels during early phase of the nitrogen-fixing symbiosis and buffers oxygen in functioning nodules. May not function as an oxygen storage or transport protein. Has an unusually high affinity for O(2) through a hexacoordinate heme iron because of a very low dissociation constant. The polypeptide is Anaerobic nitrite reductase Glb1-1 (Lotus japonicus (Lotus corniculatus var. japonicus)).